Consider the following 671-residue polypeptide: UvrABC system protein B (671 aa).

A Helicase ATP-binding domain is found at 31 to 414 (DGFEQGEKAQ…ELNQTDHKVE (384 aa)). 44–51 (GATGTGKT) is an ATP binding site. The Beta-hairpin signature appears at 97 to 120 (YYDYYQPEAYVPQSDTYIEKDSSI). Positions 435 to 601 (QIDDLVGEVN…TIVKPIRDVI (167 aa)) constitute a Helicase C-terminal domain. Residues 630 to 665 (QNMIKTLTAQMQEAAKKLDFEEAANLRDAIMDLKKQ) enclose the UVR domain.

Belongs to the UvrB family. As to quaternary structure, forms a heterotetramer with UvrA during the search for lesions. Interacts with UvrC in an incision complex.

Its subcellular location is the cytoplasm. Its function is as follows. The UvrABC repair system catalyzes the recognition and processing of DNA lesions. A damage recognition complex composed of 2 UvrA and 2 UvrB subunits scans DNA for abnormalities. Upon binding of the UvrA(2)B(2) complex to a putative damaged site, the DNA wraps around one UvrB monomer. DNA wrap is dependent on ATP binding by UvrB and probably causes local melting of the DNA helix, facilitating insertion of UvrB beta-hairpin between the DNA strands. Then UvrB probes one DNA strand for the presence of a lesion. If a lesion is found the UvrA subunits dissociate and the UvrB-DNA preincision complex is formed. This complex is subsequently bound by UvrC and the second UvrB is released. If no lesion is found, the DNA wraps around the other UvrB subunit that will check the other stand for damage. The protein is UvrABC system protein B of Lactobacillus johnsonii (strain CNCM I-12250 / La1 / NCC 533).